Here is a 260-residue protein sequence, read N- to C-terminus: 14-3-3-like protein (260 aa).

This sequence belongs to the 14-3-3 family.

The chain is 14-3-3-like protein from Pisum sativum (Garden pea).